A 691-amino-acid polypeptide reads, in one-letter code: Protein 4.2 (691 aa).

G2 carries N-myristoyl glycine lipidation. The interval L31–F39 is band 3 binding. S248 bears the Phosphoserine; by PKA mark.

This sequence belongs to the transglutaminase superfamily. Transglutaminase family. Component of the ankyrin-1 complex in the erythrocyte, composed of ANK1, RHCE, RHAG, SLC4A1, EPB42, GYPA, GYPB and AQP1. Interacts with SLC4A1 (via the cytoplasmic domain); this interaction is mediated by the SLC4A1 Band 3-I dimer. Interacts with ANK1 (via ANK 1-13 repeats). Interacts with AQP1 (via the C-terminal). Both cAMP-dependent kinase (CAPK) and another kinase present in the red-blood cells seem to be able to phosphorylate EPB42.

It is found in the cell membrane. The protein resides in the cytoplasm. The protein localises to the cytoskeleton. In terms of biological role, component of the ankyrin-1 complex, a multiprotein complex involved in the stability and shape of the erythrocyte membrane. The chain is Protein 4.2 from Homo sapiens (Human).